The sequence spans 97 residues: DNA/RNA-binding protein Alba (97 aa).

Position 15 is an N6-acetyllysine (lysine 15).

Belongs to the histone-like Alba family. Post-translationally, acetylated. Acetylation at Lys-15 decreases DNA-binding affinity.

The protein localises to the cytoplasm. Its subcellular location is the chromosome. In terms of biological role, binds double-stranded DNA tightly but without sequence specificity. Involved in DNA compaction. The polypeptide is DNA/RNA-binding protein Alba (Ignicoccus hospitalis (strain KIN4/I / DSM 18386 / JCM 14125)).